A 154-amino-acid chain; its full sequence is MKLLVLWVFAMMATVAMSRRWTFVRYHYINKAYEVTMKIQIISGFDRQLTAWLRVHGRRLTNNQKKTLFFVNRRYMQTHWQNYMLWVKRKIKALGRPAAVGDYTRLGAEIGRRVDMVFFYNFLSGRKMIPPYSAYMAKLNALRPADVPVKNHGK.

The signal sequence occupies residues 1–18; the sequence is MKLLVLWVFAMMATVAMS.

As to quaternary structure, monomer. Homodimer. Molecules associate into dimers and then rapidly dissociate again. Interacts (as a monomer) with the egg vitelline layer protein VERL (via VERL repeats); each VERL chain can bind multiple copies of lysin. In terms of tissue distribution, sperm.

It localises to the cytoplasmic vesicle. The protein localises to the secretory vesicle. It is found in the acrosome lumen. In terms of biological role, creates a 3 um hole in the egg vitelline layer through which the sperm passes. Does not have enzyme activity. Species-specific interaction between the sperm protein lysin and the egg protein VERL exposes a basic surface on lysin that may dissociate the egg vitelline layer via electrostatic repulsion. Plays a role in ensuring species-specific fertilization. This chain is Egg-lysin, found in Haliotis fulgens (Green abalone).